The chain runs to 101 residues: NADH-quinone oxidoreductase subunit K (101 aa).

3 helical membrane passes run 4-24 (LGHM…GIFL), 30-50 (IVLL…FVGF), and 62-82 (FVFF…AILV).

The protein belongs to the complex I subunit 4L family. NDH-1 is composed of 14 different subunits. Subunits NuoA, H, J, K, L, M, N constitute the membrane sector of the complex.

It localises to the cell inner membrane. The catalysed reaction is a quinone + NADH + 5 H(+)(in) = a quinol + NAD(+) + 4 H(+)(out). NDH-1 shuttles electrons from NADH, via FMN and iron-sulfur (Fe-S) centers, to quinones in the respiratory chain. The immediate electron acceptor for the enzyme in this species is believed to be ubiquinone. Couples the redox reaction to proton translocation (for every two electrons transferred, four hydrogen ions are translocated across the cytoplasmic membrane), and thus conserves the redox energy in a proton gradient. In Stenotrophomonas maltophilia (strain K279a), this protein is NADH-quinone oxidoreductase subunit K.